The primary structure comprises 52 residues: Rubredoxin (52 aa).

The Rubredoxin-like domain occupies M1–I52. Fe cation is bound by residues C6, C9, C39, and C42.

It belongs to the rubredoxin family. Fe(3+) is required as a cofactor.

Rubredoxin is a small nonheme, iron protein lacking acid-labile sulfide. Its single Fe, chelated to 4 Cys, functions as an electron acceptor and may also stabilize the conformation of the molecule. In Thermoanaerobacterium thermosaccharolyticum (strain ATCC 7956 / DSM 571 / NCIMB 9385 / NCA 3814 / NCTC 13789 / WDCM 00135 / 2032) (Clostridium thermosaccharolyticum), this protein is Rubredoxin.